We begin with the raw amino-acid sequence, 132 residues long: Small ribosomal subunit protein uS8 (132 aa).

Belongs to the universal ribosomal protein uS8 family. As to quaternary structure, part of the 30S ribosomal subunit. Contacts proteins S5 and S12.

One of the primary rRNA binding proteins, it binds directly to 16S rRNA central domain where it helps coordinate assembly of the platform of the 30S subunit. This is Small ribosomal subunit protein uS8 from Geobacillus sp. (strain WCH70).